Here is a 117-residue protein sequence, read N- to C-terminus: Large ribosomal subunit protein bL20 (117 aa).

Belongs to the bacterial ribosomal protein bL20 family.

Functionally, binds directly to 23S ribosomal RNA and is necessary for the in vitro assembly process of the 50S ribosomal subunit. It is not involved in the protein synthesizing functions of that subunit. In Actinobacillus pleuropneumoniae serotype 7 (strain AP76), this protein is Large ribosomal subunit protein bL20.